An 809-amino-acid chain; its full sequence is Eukaryotic translation initiation factor 3 subunit C (809 aa).

The interval M1–K102 is disordered. Composition is skewed to acidic residues over residues S18–L30 and S37–D59. Positions F605 to E780 constitute a PCI domain.

This sequence belongs to the eIF-3 subunit C family. As to quaternary structure, component of the eukaryotic translation initiation factor 3 (eIF-3) complex.

It is found in the cytoplasm. Its function is as follows. Component of the eukaryotic translation initiation factor 3 (eIF-3) complex, which is involved in protein synthesis of a specialized repertoire of mRNAs and, together with other initiation factors, stimulates binding of mRNA and methionyl-tRNAi to the 40S ribosome. The eIF-3 complex specifically targets and initiates translation of a subset of mRNAs involved in cell proliferation. This is Eukaryotic translation initiation factor 3 subunit C from Vanderwaltozyma polyspora (strain ATCC 22028 / DSM 70294 / BCRC 21397 / CBS 2163 / NBRC 10782 / NRRL Y-8283 / UCD 57-17) (Kluyveromyces polysporus).